The chain runs to 500 residues: NAD(P)H-quinone oxidoreductase chain 4, chloroplastic (500 aa).

Helical transmembrane passes span 4–24 (FYWL…IALL), 35–55 (YTIC…CYHF), 80–100 (LGID…TTLA), 113–130 (LFHF…GSFS), 134–154 (LLLF…LLSM), 167–187 (FILY…GMGL), 208–228 (ALEI…SPII), 242–262 (HYST…YGLV), 274–294 (SIFS…AALT), 305–325 (IAYS…SITD), 330–350 (GAIL…FLAG), 364–384 (MGGI…FSMA), 386–406 (LALP…GIIT), 416–436 (ILIT…SLSM), and 462–482 (IFIF…PDFV).

It belongs to the complex I subunit 4 family.

It is found in the plastid. The protein resides in the chloroplast thylakoid membrane. It catalyses the reaction a plastoquinone + NADH + (n+1) H(+)(in) = a plastoquinol + NAD(+) + n H(+)(out). The enzyme catalyses a plastoquinone + NADPH + (n+1) H(+)(in) = a plastoquinol + NADP(+) + n H(+)(out). The sequence is that of NAD(P)H-quinone oxidoreductase chain 4, chloroplastic from Nymphaea alba (White water-lily).